A 217-amino-acid chain; its full sequence is Serine acetyltransferase (217 aa).

It belongs to the transferase hexapeptide repeat family.

The protein localises to the cytoplasm. The catalysed reaction is L-serine + acetyl-CoA = O-acetyl-L-serine + CoA. It participates in amino-acid biosynthesis; L-cysteine biosynthesis; L-cysteine from L-serine: step 1/2. With respect to regulation, inhibited by cysteine. Functionally, catalyzes the acetylation of serine by acetyl-CoA to produce O-acetylserine (OAS). The sequence is that of Serine acetyltransferase from Bacillus pumilus (strain SAFR-032).